We begin with the raw amino-acid sequence, 580 residues long: MTDPAGPRGSETERLLTPNPGYGTQVGPSPAPPTPPEEEDLRRRLKYFFMSPCDKFRAKGRKPCKLMLQVVKILVVTVQLILFGLSNQLAVTFREENTIAFRHLFLLGYSDGADDTFAAYTQEQLYQAIFHAVDQYLALPDVSLGRYAYVHGGGDPWTNGSGLALCQRYYHRGHVDPANDTFDIDPMVVTDCIQVDPPERPPPSPSDDLALLEGSSSYKNLTLKFHKLVNVTIHFRLKTINLQSLINNEIPDCYTFSVLITFDNKAHSGRIPISLETQAHIQECKHPSVFRHGDNSFRLLFDVVVILTCSLSFLLCARSLLRGFLLQNEFVRFMWRQRRRVISLWERLEFVNGWYILLVTSDVLTISGTIMKIGIEAKNLASYDVCSILLGTSTLLVWVGVIRYLTFFHNYNILIATLRVALPSVMRFCCCVAVIYLGYCFCGWIVLGPYHVKFRSLSMVSECLFSLINGDDMFVTFAAMQAQQGRSSLVWLFSQLYLYSFISLFIYMVLSLFIALITGAYDTIKHPGGAGAEESELQAYIAQCQDSPTSGKFRRGSGSACSLLCCCGRDPSEEHSLLVN.

Positions methionine 1–glutamate 38 are disordered. Residues methionine 1–lysine 65 are Cytoplasmic-facing. A Phosphoserine modification is found at serine 10. The Dileucine motif; mediates targeting to lysosomes signature appears at glutamate 11 to leucine 16. Residues arginine 42–lysine 62 are interaction with phosphoinositides. Residues leucine 66–serine 86 form a helical membrane-spanning segment. The Extracellular portion of the chain corresponds to asparagine 87 to arginine 298. Residues leucine 107 to threonine 121 form an extracellular/lumenal pore loop region. A disulfide bond links cysteine 166 and cysteine 192. Residue asparagine 230 is glycosylated (N-linked (GlcNAc...) asparagine). An intrachain disulfide couples cysteine 253 to cysteine 284. A helical membrane pass occupies residues leucine 299–leucine 321. Over arginine 322–phenylalanine 350 the chain is Cytoplasmic. Residues valine 351–methionine 371 form a helical membrane-spanning segment. Over lysine 372 to serine 382 the chain is Extracellular. Residues tyrosine 383–leucine 405 traverse the membrane as a helical segment. The Cytoplasmic portion of the chain corresponds to threonine 406–arginine 427. The helical transmembrane segment at phenylalanine 428–glycine 448 threads the bilayer. Topologically, residues proline 449 to serine 456 are extracellular. The pore-forming intramembrane region spans leucine 457 to phenylalanine 477. The Selectivity filter motif lies at asparagine 469–phenylalanine 474. Over alanine 478–tryptophan 491 the chain is Extracellular. Residues leucine 492–phenylalanine 513 traverse the membrane as a helical segment. The Cytoplasmic segment spans residues isoleucine 514 to asparagine 580. Phosphoserine; by PAK occurs at positions 557 and 559. The interval cysteine 565–cysteine 567 is required for palmitoylation and association with membranes. Residues glutamate 573–leucine 578 carry the Dileucine internalization motif; mediates AP2 complex-dependent internalization motif.

It belongs to the transient receptor (TC 1.A.4) family. Polycystin subfamily. MCOLN1 sub-subfamily. Homotetramer. Homooligomer. Can heterooligomerize with MCOLN2 or MCOLN3; heteromeric assemblies have different channel properties as compared to the respective homooligomers and may be tissue-specific. Interacts with PDCD6. Interacts with TMEM163. Interacts with LAPTM4B. Palmitoylated; involved in association with membranes. Post-translationally, phosphorylation by PKA inhibits channel activity. Dephosphorylation increases activity. In terms of processing, proteolytically cleaved probably involving multiple lysosomal proteases including cathepsin B; inhibits lysosomal channel activity.

The protein localises to the late endosome membrane. It is found in the lysosome membrane. Its subcellular location is the cytoplasmic vesicle membrane. The protein resides in the cell projection. It localises to the phagocytic cup. The protein localises to the cytoplasmic vesicle. It is found in the phagosome membrane. Its subcellular location is the cell membrane. The catalysed reaction is Ca(2+)(in) = Ca(2+)(out). The enzyme catalyses Fe(2+)(in) = Fe(2+)(out). It catalyses the reaction Mg(2+)(in) = Mg(2+)(out). It carries out the reaction K(+)(in) = K(+)(out). The catalysed reaction is Na(+)(in) = Na(+)(out). Channel activity is controlled by multiple regulatory mechanisms in different subcellular compartments. Channel function is transiently modulated by changes in Ca(2+) in a pH-dependent manner; pH changes modify the aggregation state of unitary channels; a negative cooperativity between extracellular/lumenal Ca(2+) and H(+) is suggested. Regulated by phosphoinositides in a compartment-specific manner: in lysosomes activated by PtdIns(3,5)P2 (Phosphatidylinositol 3,5-bisphosphate) and at the plasma membrane inhibited by PtdIns(4,5)P2 (Phosphatidylinositol 4,5-bisphosphate). Nonselective cation channel probably playing a role in the regulation of membrane trafficking events and of metal homeostasis. Acts as a Ca(2+)-permeable cation channel with inwardly rectifying activity. Proposed to play a major role in Ca(2+) release from late endosome and lysosome vesicles to the cytoplasm, which is important for many lysosome-dependent cellular events, including the fusion and trafficking of these organelles, exocytosis and autophagy. Required for efficient uptake of large particles in macrophages in which Ca(2+) release from the lysosomes triggers lysosomal exocytosis. May also play a role in phagosome-lysosome fusion. Involved in lactosylceramide trafficking indicative for a role in the regulation of late endocytic membrane fusion/fission events. By mediating lysosomal Ca(2+) release is involved in regulation of mTORC1 signaling and in mTOR/TFEB-dependent lysosomal adaptation to environmental cues such as nutrient levels. Seems to act as lysosomal active oxygen species (ROS) sensor involved in ROS-induced TFEB activation and autophagy. Also functions as a Fe(2+) permeable channel in late endosomes and lysosomes. Also permeable to Mg(2+), Na(+). K(+) and Cs(+). Proposed to play a role in zinc homeostasis probably implicating its association with TMEM163. In adaptive immunity, TRPML2 and TRPML1 may play redundant roles in the function of the specialized lysosomes of B cells. Its function is as follows. May contribute to cellular lipase activity within the late endosomal pathway or at the cell surface which may be involved in processes of membrane reshaping and vesiculation, especially the growth of tubular structures. However, it is not known, whether it conveys the enzymatic activity directly, or merely facilitates the activity of an associated phospholipase. The polypeptide is Mucolipin-1 (MCOLN1) (Macaca fascicularis (Crab-eating macaque)).